The primary structure comprises 506 residues: Zinc finger and SCAN domain containing protein 4C (506 aa).

Residues 1–24 (MASQQAPAKDLQTNNLEFTPTDSS) form a disordered region. The region spanning 37-119 (SAQLNFSPSN…RFMESLTDEC (83 aa)) is the SCAN box domain. 4 consecutive C2H2-type zinc fingers follow at residues 395 to 417 (YKCE…QRTH), 424 to 446 (LLCV…EIIH), 452 to 474 (FKCS…EMIH), and 480 to 503 (YVCS…RNYH).

In terms of tissue distribution, embryonic stem (ES) cell-specific. Expressed in only 5% of ES cells at a given time, but nearly all ES cells express it at least once during 9 passages.

It is found in the nucleus. Its subcellular location is the chromosome. The protein localises to the telomere. Functionally, embryonic stem (ES) cell-specific transcription factor required to regulate ES cell pluripotency. Binds telomeres and plays a key role in genomic stability in ES cells by regulating telomere elongation. Acts as an activator of spontaneous telomere sister chromatid exchange (T-SCE) and telomere elongation in undifferentiated ES cells. This is Zinc finger and SCAN domain containing protein 4C (Zscan4c) from Mus musculus (Mouse).